A 319-amino-acid chain; its full sequence is Cytochrome f (319 aa).

An N-terminal signal peptide occupies residues 1-35; sequence MQKKDVCEYITKWVSVTISTLVTIGVLVFPLSSEA. Heme-binding residues include Y36, C56, C59, and H60. The chain crosses the membrane as a helical span at residues 285-305; sequence IQGLLVFFASVVLAQIFLVLK.

Belongs to the cytochrome f family. In terms of assembly, the 4 large subunits of the cytochrome b6-f complex are cytochrome b6, subunit IV (17 kDa polypeptide, petD), cytochrome f and the Rieske protein, while the 4 small subunits are PetG, PetL, PetM and PetN. The complex functions as a dimer. Requires heme as cofactor.

Its subcellular location is the plastid. The protein localises to the chloroplast thylakoid membrane. Functionally, component of the cytochrome b6-f complex, which mediates electron transfer between photosystem II (PSII) and photosystem I (PSI), cyclic electron flow around PSI, and state transitions. The protein is Cytochrome f of Zygnema circumcarinatum (Green alga).